We begin with the raw amino-acid sequence, 241 residues long: Triosephosphate isomerase (241 aa).

9 to 11 contacts substrate; it reads NWK. Histidine 88 functions as the Electrophile in the catalytic mechanism. Residue glutamate 158 is the Proton acceptor of the active site. Substrate is bound by residues glycine 164, serine 203, and 224–225; that span reads GG.

Belongs to the triosephosphate isomerase family. Homodimer.

It localises to the cytoplasm. It catalyses the reaction D-glyceraldehyde 3-phosphate = dihydroxyacetone phosphate. Its pathway is carbohydrate biosynthesis; gluconeogenesis. The protein operates within carbohydrate degradation; glycolysis; D-glyceraldehyde 3-phosphate from glycerone phosphate: step 1/1. Involved in the gluconeogenesis. Catalyzes stereospecifically the conversion of dihydroxyacetone phosphate (DHAP) to D-glyceraldehyde-3-phosphate (G3P). This is Triosephosphate isomerase from Dichelobacter nodosus (strain VCS1703A).